The following is a 514-amino-acid chain: 2,3-bisphosphoglycerate-independent phosphoglycerate mutase (514 aa).

Mn(2+) is bound by residues Asp-13 and Ser-63. The active-site Phosphoserine intermediate is Ser-63. Substrate contacts are provided by residues His-124, 154–155 (RD), Arg-186, Arg-192, 258–261 (RADR), and Lys-332. The Mn(2+) site is built by Asp-399, His-403, Asp-440, His-441, and His-459.

This sequence belongs to the BPG-independent phosphoglycerate mutase family. In terms of assembly, monomer. Mn(2+) is required as a cofactor.

It catalyses the reaction (2R)-2-phosphoglycerate = (2R)-3-phosphoglycerate. It participates in carbohydrate degradation; glycolysis; pyruvate from D-glyceraldehyde 3-phosphate: step 3/5. In terms of biological role, catalyzes the interconversion of 2-phosphoglycerate and 3-phosphoglycerate. This Legionella pneumophila (strain Corby) protein is 2,3-bisphosphoglycerate-independent phosphoglycerate mutase.